The sequence spans 99 residues: Large ribosomal subunit protein uL23 (99 aa).

The protein belongs to the universal ribosomal protein uL23 family. In terms of assembly, part of the 50S ribosomal subunit. Contacts protein L29, and trigger factor when it is bound to the ribosome.

Functionally, one of the early assembly proteins it binds 23S rRNA. One of the proteins that surrounds the polypeptide exit tunnel on the outside of the ribosome. Forms the main docking site for trigger factor binding to the ribosome. The protein is Large ribosomal subunit protein uL23 of Rhodopseudomonas palustris (strain BisB18).